The chain runs to 155 residues: Late embryogenesis abundant protein 2 (155 aa).

Positions 1–155 (MTSHDQSYRA…DKDHFPTNRH (155 aa)) are disordered. Basic and acidic residues-rich tracts occupy residues 11–21 (GEAKGRTEEKT) and 28–39 (IEDKAQAAKEKA). The segment covering 40–78 (QQAAQTAKDKTSQTAQAAKEKTQQTAQAAKDKTQQTTQA) has biased composition (low complexity). Tandem repeats lie at residues 53–63 (TAQAAKEKTQQ) and 64–74 (TAQAAKDKTQQ). The tract at residues 53-74 (TAQAAKEKTQQTAQAAKDKTQQ) is 2 X 11 AA approximate tandem repeats of T-A-Q-A-A-K-E-K-T-Q-Q. Over residues 79 to 95 (TKEKAQDTTGRAKEKGS) the composition is skewed to basic and acidic residues. Residues 97–120 (MGQSTKETAQSGKDNSAGFLQQTG) are compositionally biased toward polar residues. Positions 144–155 (DQDKDHFPTNRH) are enriched in basic and acidic residues.

The protein belongs to the LEA type 4 family. As to expression, highest expression is found in seeds. No expression detected in adult tissues.

This chain is Late embryogenesis abundant protein 2, found in Cicer arietinum (Chickpea).